The primary structure comprises 243 residues: Carboxy-S-adenosyl-L-methionine synthase (243 aa).

S-adenosyl-L-methionine-binding positions include Tyr-40, 65–67 (GCS), 90–91 (DN), 118–119 (DI), Asn-133, and Arg-200.

This sequence belongs to the class I-like SAM-binding methyltransferase superfamily. Cx-SAM synthase family. Homodimer.

It carries out the reaction prephenate + S-adenosyl-L-methionine = carboxy-S-adenosyl-L-methionine + 3-phenylpyruvate + H2O. In terms of biological role, catalyzes the conversion of S-adenosyl-L-methionine (SAM) to carboxy-S-adenosyl-L-methionine (Cx-SAM). This chain is Carboxy-S-adenosyl-L-methionine synthase, found in Shewanella amazonensis (strain ATCC BAA-1098 / SB2B).